A 156-amino-acid polypeptide reads, in one-letter code: S-ribosylhomocysteine lyase (156 aa).

Fe cation contacts are provided by His54, His58, and Cys126.

The protein belongs to the LuxS family. As to quaternary structure, homodimer. Requires Fe cation as cofactor.

The catalysed reaction is S-(5-deoxy-D-ribos-5-yl)-L-homocysteine = (S)-4,5-dihydroxypentane-2,3-dione + L-homocysteine. In terms of biological role, involved in the synthesis of autoinducer 2 (AI-2) which is secreted by bacteria and is used to communicate both the cell density and the metabolic potential of the environment. The regulation of gene expression in response to changes in cell density is called quorum sensing. Catalyzes the transformation of S-ribosylhomocysteine (RHC) to homocysteine (HC) and 4,5-dihydroxy-2,3-pentadione (DPD). The protein is S-ribosylhomocysteine lyase of Shouchella clausii (strain KSM-K16) (Alkalihalobacillus clausii).